The following is a 329-amino-acid chain: tRNA N6-adenosine threonylcarbamoyltransferase (329 aa).

Fe cation contacts are provided by His-110 and His-114. Residues 132-136 (VISGG), Asp-165, Gly-178, and Asn-271 each bind substrate. Asp-299 provides a ligand contact to Fe cation.

Belongs to the KAE1 / TsaD family. Fe(2+) serves as cofactor.

It is found in the cytoplasm. It carries out the reaction L-threonylcarbamoyladenylate + adenosine(37) in tRNA = N(6)-L-threonylcarbamoyladenosine(37) in tRNA + AMP + H(+). Required for the formation of a threonylcarbamoyl group on adenosine at position 37 (t(6)A37) in tRNAs that read codons beginning with adenine. Is involved in the transfer of the threonylcarbamoyl moiety of threonylcarbamoyl-AMP (TC-AMP) to the N6 group of A37, together with TsaE and TsaB. TsaD likely plays a direct catalytic role in this reaction. This is tRNA N6-adenosine threonylcarbamoyltransferase from Neorickettsia sennetsu (strain ATCC VR-367 / Miyayama) (Ehrlichia sennetsu).